Consider the following 37-residue polypeptide: Large ribosomal subunit protein bL36 (37 aa).

Belongs to the bacterial ribosomal protein bL36 family.

The protein is Large ribosomal subunit protein bL36 of Thermomicrobium roseum (strain ATCC 27502 / DSM 5159 / P-2).